The following is an 854-amino-acid chain: Envelope glycoprotein gp150 (854 aa).

Over 1–783 the chain is Extracellular; the sequence is MAEGFAANRQ…WIGNIPQYLK (783 aa). 15 N-linked (GlcNAc...) asparagine; by host glycosylation sites follow: Asn-218, Asn-256, Asn-267, Asn-272, Asn-296, Asn-328, Asn-334, Asn-340, Asn-416, Asn-420, Asn-479, Asn-497, Asn-529, Asn-546, and Asn-549. The interval 614–634 is fusion peptide; it reads VMLALATVLSMAGAGTGATAI. Positions 641–691 form a coiled coil; the sequence is QQVLATHQEAIEKVTEALKINNLRLVTLEHQVLVIGLKVEAMEKFLYTAFA. An immunosuppression region spans residues 660–678; the sequence is INNLRLVTLEHQVLVIGLK. 4 N-linked (GlcNAc...) asparagine; by host glycosylation sites follow: Asn-715, Asn-719, Asn-727, and Asn-735. Residues 734–770 adopt a coiled-coil conformation; that stretch reads YNQTKDLQQRFYEIIMDIEQNNVQGKKGLQQLQEWED. A helical membrane pass occupies residues 784-804; sequence GLLGGILGIGLGMLLLILCLP. Residues 805–854 lie on the Cytoplasmic side of the membrane; that stretch reads TLVDCIRNCIHKILGYTVIAMPEVEEEEIQPQMELRRNGRQCGMSEKEEE.

In terms of assembly, the mature envelope protein (Env) consists of a trimer of SU-TM heterodimers attached by noncovalent interactions or by a labile interchain disulfide bond. Post-translationally, specific enzymatic cleavages in vivo yield mature proteins. Envelope glycoproteins are synthesized as an inactive precursor that is N-glycosylated and processed likely by host cell furin or by a furin-like protease in the Golgi to yield the mature SU and TM proteins. The cleavage site between SU and TM requires the minimal sequence [KR]-X-[KR]-R.

It localises to the virion membrane. The protein localises to the host cell membrane. Its function is as follows. The surface protein (SU) attaches the virus to the host cell by binding to its receptor. This interaction triggers the refolding of the transmembrane protein (TM) and is thought to activate its fusogenic potential by unmasking its fusion peptide. Fusion occurs at the host cell plasma membrane. Functionally, the transmembrane protein (TM) acts as a class I viral fusion protein. Under the current model, the protein has at least 3 conformational states: pre-fusion native state, pre-hairpin intermediate state, and post-fusion hairpin state. During viral and target cell membrane fusion, the coiled coil regions (heptad repeats) assume a trimer-of-hairpins structure, positioning the fusion peptide in close proximity to the C-terminal region of the ectodomain. The formation of this structure appears to drive apposition and subsequent fusion of viral and target cell membranes. Membranes fusion leads to delivery of the nucleocapsid into the cytoplasm. This is Envelope glycoprotein gp150 (env) from Feline immunodeficiency virus (isolate Wo) (FIV).